The chain runs to 235 residues: Lipoprotein-releasing system ATP-binding protein LolD (235 aa).

In terms of domain architecture, ABC transporter spans 7 to 234; it reads LQCTNLSKRY…QQELTLMGAR (228 aa). An ATP-binding site is contributed by 43-50; sequence GSSGSGKS.

This sequence belongs to the ABC transporter superfamily. Lipoprotein translocase (TC 3.A.1.125) family. In terms of assembly, the complex is composed of two ATP-binding proteins (LolD) and two transmembrane proteins (LolC and LolE).

The protein localises to the cell inner membrane. Its function is as follows. Part of the ABC transporter complex LolCDE involved in the translocation of mature outer membrane-directed lipoproteins, from the inner membrane to the periplasmic chaperone, LolA. Responsible for the formation of the LolA-lipoprotein complex in an ATP-dependent manner. The polypeptide is Lipoprotein-releasing system ATP-binding protein LolD (Pectobacterium atrosepticum (strain SCRI 1043 / ATCC BAA-672) (Erwinia carotovora subsp. atroseptica)).